Reading from the N-terminus, the 379-residue chain is Sulfate adenylyltransferase (379 aa).

This sequence belongs to the sulfate adenylyltransferase family.

It carries out the reaction sulfate + ATP + H(+) = adenosine 5'-phosphosulfate + diphosphate. It participates in sulfur metabolism; hydrogen sulfide biosynthesis; sulfite from sulfate: step 1/3. The chain is Sulfate adenylyltransferase from Cenarchaeum symbiosum (strain A).